The sequence spans 1290 residues: Vacuolating cytotoxin autotransporter (1290 aa).

An N-terminal signal peptide occupies residues 1–33 (MEIQQTHRKINRPLVSLALVGALVSITPQQSHA). A disordered region spans residues 326–374 (PPEGGYKDKPKDKPSNTTQNNANNNQQNSAQNNSNTQVINPPNSAQKTE). Residues 330 to 339 (GYKDKPKDKP) are compositionally biased toward basic and acidic residues. A compositionally biased stretch (low complexity) spans 340–362 (SNTTQNNANNNQQNSAQNNSNTQ). Residues 363 to 374 (VINPPNSAQKTE) show a composition bias toward polar residues. An Autotransporter domain is found at 1018 to 1290 (KYEKPTNVWA…ASNLGMRYSF (273 aa)).

Its subcellular location is the periplasm. The protein resides in the secreted. It localises to the cell surface. It is found in the cell outer membrane. In terms of biological role, induces vacuolation of eukaryotic cells. Causes ulceration and gastric lesions. This chain is Vacuolating cytotoxin autotransporter (vacA), found in Helicobacter pylori (strain ATCC 700392 / 26695) (Campylobacter pylori).